An 871-amino-acid chain; its full sequence is MADPGDGPRAAPGDVAEPPGDESGTSGGEAFPLSSLANLFEGEEGSSSLSPVDASRPAGPGDGRPNLRMKFQGAFRKGVPNPIDLLESTLYESSVVPGPKKAPMDSLFDYGTYRHHPSDNKRWRRKVVEKQPQSPKAPAPQPPPILKVFNRPILFDIVSRGSTADLDGLLSYLLTHKKRLTDEEFREPSTGKTCLPKALLNLSNGRNDTIPVLLDIAERTGNMREFINSPFRDIYYRGQTALHIAIERRCKHYVELLVAQGADVHAQARGRFFQPKDEGGYFYFGELPLSLAACTNQPHIVNYLTENPHKKADMRRQDSRGNTVLHALVAIADNTRENTKFVTKMYDLLLLKCSRLFPDSNLETVLNNDGLSPLMMAAKTGKIGVFQHIIRREVTDEDTRHLSRKFKDWAYGPVYSSLYDLSSLDTCGEEVSVLEILVYNSKIENRHEMLAVEPINELLRDKWRKFGAVSFYINVVSYLCAMVIFTLTAYYQPLEGTPPYPYRTTVDYLRLAGEVITLLTGVLFFFTSIKDLFMKKCPGVNSLFVDGSFQLLYFIYSVLVVVSAALYLAGIEAYLAVMVFALVLGWMNALYFTRGLKLTGTYSIMIQKILFKDLFRFLLVYLLFMIGYASALVTLLNPCTNMKVCNEDQSNCTVPSYPACRDSETFSAFLLDLFKLTIGMGDLEMLSSAKYPVVFILLLVTYIILTFVLLLNMLIALMGETVGQVSKESKHIWKLQWATTILDIERSFPVFLRKAFRSGEMVTVGKSSDGTPDRRWCFRVDEVNWSHWNQNLGIINEDPGKSEIYQYYGFSHTMGRLRRDRWSSVVPRVVELNKNSGTDEVVVPLDNLGNPNCDGHQQGYAPKWRAEDAPL.

Disordered regions lie at residues 1-68 (MADP…PNLR) and 110-143 (YGTY…PQPP). The Cytoplasmic portion of the chain corresponds to 1 to 469 (MADPGDGPRA…RDKWRKFGAV (469 aa)). The residue at position 110 (Tyr110) is a Phosphotyrosine. The span at 116–129 (HPSDNKRWRRKVVE) shows a compositional bias: basic and acidic residues. Residues Lys192, Lys197, Asn201, 236–239 (YRGQ), and Arg248 contribute to the ATP site. ANK repeat units follow at residues 237 to 266 (RGQT…DVHA) and 284 to 313 (FGEL…KKAD). 249 to 251 (RCK) provides a ligand contact to a 1,2-diacyl-sn-glycero-3-phospho-(1D-myo-inositol-4,5-bisphosphate). Tyr253 is modified (phosphotyrosine). A 1,2-diacyl-sn-glycero-3-phospho-(1D-myo-inositol-4,5-bisphosphate)-binding positions include 296–299 (NQPH) and Lys344. One copy of the ANK 3 repeat lies at 369–398 (DGLSPLMMAAKTGKIGVFQHIIRREVTDED). Residues 470–490 (SFYINVVSYLCAMVIFTLTAY) form a helical membrane-spanning segment. Residues 491–507 (YQPLEGTPPYPYRTTVD) lie on the Extracellular side of the membrane. A helical membrane pass occupies residues 508 to 534 (YLRLAGEVITLLTGVLFFFTSIKDLFM). The Cytoplasmic segment spans residues 535-547 (KKCPGVNSLFVDG). The chain crosses the membrane as a helical span at residues 548–568 (SFQLLYFIYSVLVVVSAALYL). At 569–572 (AGIE) the chain is on the extracellular side. A helical transmembrane segment spans residues 573–593 (AYLAVMVFALVLGWMNALYFT). Residues 594 to 608 (RGLKLTGTYSIMIQK) lie on the Cytoplasmic side of the membrane. Residues 609-636 (ILFKDLFRFLLVYLLFMIGYASALVTLL) form a helical membrane-spanning segment. The Extracellular portion of the chain corresponds to 637 to 665 (NPCTNMKVCNEDQSNCTVPSYPACRDSET). The pore-forming intramembrane region spans 666-685 (FSAFLLDLFKLTIGMGDLEM). The short motif at 679 to 682 (GMGD) is the Selectivity filter element. Asp682 contacts Ca(2+). The Extracellular segment spans residues 686–693 (LSSAKYPV). The helical transmembrane segment at 694–722 (VFILLLVTYIILTFVLLLNMLIALMGETV) threads the bilayer. The Cytoplasmic segment spans residues 723-871 (GQVSKESKHI…PKWRAEDAPL (149 aa)). Residue Tyr805 is modified to Phosphotyrosine. An interaction with calmodulin and ITPR3 region spans residues 812 to 831 (HTMGRLRRDRWSSVVPRVVE). The residue at position 824 (Ser824) is a Phosphoserine.

This sequence belongs to the transient receptor (TC 1.A.4) family. TrpV subfamily. TRPV4 sub-subfamily. In terms of assembly, homotetramer. Interacts with calmodulin. Interacts with MAP7 and Src family Tyr protein kinases LYN, SRC, FYN, HCK, LCK and YES. Interacts with CTNNB1. The TRPV4 and CTNNB1 complex can interact with CDH1. Part of a complex containing MLC1, AQP4, HEPACAM and ATP1B1. Interacts with PACSIN1, PACSIN2 and PACSIN3 (via SH3 domain). Interacts with ITPR3. Interacts with AQP5; the interaction is probably indirect and regulates TRPV4 activation by hypotonicity. Interacts with ANO1. Interacts (via C-terminus) with PKD2 (via C-terminus). Interacts with DDX3X; this interaction is decreased when the channel is activated. N-glycosylated. In terms of tissue distribution, expressed lung, spleen, kidney, testis, fat, and at very low levels in trigeminal ganglia.

It localises to the cell membrane. Its subcellular location is the apical cell membrane. The protein resides in the cell junction. The protein localises to the adherens junction. It is found in the cell projection. It localises to the cilium. The enzyme catalyses Ca(2+)(in) = Ca(2+)(out). Non-selective calcium permeant cation channel involved in osmotic sensitivity and mechanosensitivity. Activation by exposure to hypotonicity within the physiological range exhibits an outward rectification. Also activated by heat, low pH, citrate and phorbol esters. Increase of intracellular Ca(2+) potentiates currents. Channel activity seems to be regulated by a calmodulin-dependent mechanism with a negative feedback mechanism. Acts as a regulator of intracellular Ca(2+) in synoviocytes. Plays an obligatory role as a molecular component in the nonselective cation channel activation induced by 4-alpha-phorbol 12,13-didecanoate and hypotonic stimulation in synoviocytes and also regulates production of IL-8. Together with PKD2, forms mechano- and thermosensitive channels in cilium. Promotes cell-cell junction formation in skin keratinocytes and plays an important role in the formation and/or maintenance of functional intercellular barriers. Negatively regulates expression of PPARGC1A, UCP1, oxidative metabolism and respiration in adipocytes. Regulates expression of chemokines and cytokines related to pro-inflammatory pathway in adipocytes. Together with AQP5, controls regulatory volume decrease in salivary epithelial cells. Required for normal development and maintenance of bone and cartilage. In its inactive state, may sequester DDX3X at the plasma membrane. When activated, the interaction between both proteins is affected and DDX3X relocalizes to the nucleus. In neurons of the central nervous system, could play a role in triggering voluntary water intake in response to increased sodium concentration in body fluid. The polypeptide is Transient receptor potential cation channel subfamily V member 4 (Trpv4) (Rattus norvegicus (Rat)).